Reading from the N-terminus, the 154-residue chain is MIKYSIDELIQLKPSETLKVSFDHVEFRNIIEKVVELQKLKEEEFHSHHGNRRRSSHHHMKPKIKHNKPKVKTDADGWSTLEPATAGHEEESSSSATPAAAATTKTGAPQETIRVKPNNKNISSSRPADNSDIIADKQTHGFNAFAALEDEEDE.

The interval 45-137 (FHSHHGNRRR…ADNSDIIADK (93 aa)) is disordered. Residues 48-70 (HHGNRRRSSHHHMKPKIKHNKPK) show a composition bias toward basic residues. Residues 93-108 (SSSATPAAAATTKTGA) are compositionally biased toward low complexity. Polar residues predominate over residues 118-128 (NNKNISSSRPA).

The protein belongs to the CAF20 family.

Its subcellular location is the cytoplasm. Its function is as follows. Acts as an inhibitor of cap-dependent translation. Competes with eIF4G1 and EAP1 for binding to eIF4E and interferes with the formation of the eIF4F complex, inhibiting translation and stabilizing mRNA. This Candida glabrata (strain ATCC 2001 / BCRC 20586 / JCM 3761 / NBRC 0622 / NRRL Y-65 / CBS 138) (Yeast) protein is Cap-associated protein CAF20 (CAF20).